A 231-amino-acid chain; its full sequence is ATP phosphoribosyltransferase (231 aa).

Belongs to the ATP phosphoribosyltransferase family. Short subfamily. Heteromultimer composed of HisG and HisZ subunits.

Its subcellular location is the cytoplasm. It catalyses the reaction 1-(5-phospho-beta-D-ribosyl)-ATP + diphosphate = 5-phospho-alpha-D-ribose 1-diphosphate + ATP. The protein operates within amino-acid biosynthesis; L-histidine biosynthesis; L-histidine from 5-phospho-alpha-D-ribose 1-diphosphate: step 1/9. Functionally, catalyzes the condensation of ATP and 5-phosphoribose 1-diphosphate to form N'-(5'-phosphoribosyl)-ATP (PR-ATP). Has a crucial role in the pathway because the rate of histidine biosynthesis seems to be controlled primarily by regulation of HisG enzymatic activity. The polypeptide is ATP phosphoribosyltransferase (Brucella suis (strain ATCC 23445 / NCTC 10510)).